Reading from the N-terminus, the 155-residue chain is Ribosomal RNA large subunit methyltransferase H (155 aa).

Residues L73, G104, and 123–128 (LSPLTL) each bind S-adenosyl-L-methionine.

The protein belongs to the RNA methyltransferase RlmH family. In terms of assembly, homodimer.

Its subcellular location is the cytoplasm. It catalyses the reaction pseudouridine(1915) in 23S rRNA + S-adenosyl-L-methionine = N(3)-methylpseudouridine(1915) in 23S rRNA + S-adenosyl-L-homocysteine + H(+). Functionally, specifically methylates the pseudouridine at position 1915 (m3Psi1915) in 23S rRNA. The polypeptide is Ribosomal RNA large subunit methyltransferase H (Pseudomonas putida (strain ATCC 700007 / DSM 6899 / JCM 31910 / BCRC 17059 / LMG 24140 / F1)).